A 217-amino-acid chain; its full sequence is uncharacterized protein (217 aa).

A compositionally biased stretch (polar residues) spans 59-76 (AQSTIQRTSSLPVPSSSN). 2 disordered regions span residues 59–105 (AQST…ETAN) and 124–217 (KKSL…HISK). Serine 68 is subject to Phosphoserine. Residue threonine 92 is modified to Phosphothreonine. Basic and acidic residues predominate over residues 124-135 (KKSLERRVREEQ). The span at 136–147 (EEKTDNEDDNDV) shows a compositional bias: acidic residues. Residues 148–157 (EISTQESLEN) show a composition bias toward polar residues. Residues 173-188 (LEDDIEGQEFSFDDQD) are compositionally biased toward acidic residues. Positions 199 to 217 (WLSSQKQQGSPLTSDHISK) are enriched in polar residues.

This is an uncharacterized protein from Schizosaccharomyces pombe (strain 972 / ATCC 24843) (Fission yeast).